The sequence spans 123 residues: Ribosome-binding factor A (123 aa).

It belongs to the RbfA family. Monomer. Binds 30S ribosomal subunits, but not 50S ribosomal subunits or 70S ribosomes.

It localises to the cytoplasm. Its function is as follows. One of several proteins that assist in the late maturation steps of the functional core of the 30S ribosomal subunit. Associates with free 30S ribosomal subunits (but not with 30S subunits that are part of 70S ribosomes or polysomes). Required for efficient processing of 16S rRNA. May interact with the 5'-terminal helix region of 16S rRNA. In Chlamydia trachomatis serovar L2 (strain ATCC VR-902B / DSM 19102 / 434/Bu), this protein is Ribosome-binding factor A.